A 276-amino-acid chain; its full sequence is Urease accessory protein UreD (276 aa).

The protein belongs to the UreD family. In terms of assembly, ureD, UreF and UreG form a complex that acts as a GTP-hydrolysis-dependent molecular chaperone, activating the urease apoprotein by helping to assemble the nickel containing metallocenter of UreC. The UreE protein probably delivers the nickel.

The protein localises to the cytoplasm. Required for maturation of urease via the functional incorporation of the urease nickel metallocenter. The polypeptide is Urease accessory protein UreD (Polaromonas sp. (strain JS666 / ATCC BAA-500)).